Consider the following 372-residue polypeptide: MHNQAPIQRRKSKRIYVGNVPIGDGAPIAVQSMTNTRTTDVAATVNQIKALERVGADIVRVSVPTMDAAEAFKLIKQQVNVPLVADIHFDYRIALKVAEYGVDCLRINPGNIGSEERIRAVVDCARDKNIPIRIGVNAGSLEKDLQEKYGEPTPQALLESAMRHVDHLDRLNFDQFKVSVKASDVFLAVESYRLLAKQIEQPLHLGITEAGGLRSGSVKSAIGLGLLLSEGIGDTLRVSLAADPVEEIKVGFDILKSLRIRARGINFIACPTCSRQEFDVIGTVNALEQRLEDLITPMDVSIIGCVVNGPGEALVSTLGVTGGNKKSGLYEDGIRKDRLDNNDMIDQLEARIRAKATILDEAQRISIQQIEK.

4 residues coordinate [4Fe-4S] cluster: Cys270, Cys273, Cys305, and Glu312.

The protein belongs to the IspG family. It depends on [4Fe-4S] cluster as a cofactor.

The enzyme catalyses (2E)-4-hydroxy-3-methylbut-2-enyl diphosphate + oxidized [flavodoxin] + H2O + 2 H(+) = 2-C-methyl-D-erythritol 2,4-cyclic diphosphate + reduced [flavodoxin]. It functions in the pathway isoprenoid biosynthesis; isopentenyl diphosphate biosynthesis via DXP pathway; isopentenyl diphosphate from 1-deoxy-D-xylulose 5-phosphate: step 5/6. In terms of biological role, converts 2C-methyl-D-erythritol 2,4-cyclodiphosphate (ME-2,4cPP) into 1-hydroxy-2-methyl-2-(E)-butenyl 4-diphosphate. The protein is 4-hydroxy-3-methylbut-2-en-1-yl diphosphate synthase (flavodoxin) of Enterobacter sp. (strain 638).